Consider the following 333-residue polypeptide: Biotin synthase (333 aa).

The Radical SAM core domain occupies tyrosine 47 to arginine 276. Residues cysteine 65, cysteine 69, and cysteine 72 each contribute to the [4Fe-4S] cluster site. [2Fe-2S] cluster contacts are provided by cysteine 109, cysteine 141, cysteine 201, and arginine 271.

The protein belongs to the radical SAM superfamily. Biotin synthase family. As to quaternary structure, homodimer. It depends on [4Fe-4S] cluster as a cofactor. Requires [2Fe-2S] cluster as cofactor.

The catalysed reaction is (4R,5S)-dethiobiotin + (sulfur carrier)-SH + 2 reduced [2Fe-2S]-[ferredoxin] + 2 S-adenosyl-L-methionine = (sulfur carrier)-H + biotin + 2 5'-deoxyadenosine + 2 L-methionine + 2 oxidized [2Fe-2S]-[ferredoxin]. The protein operates within cofactor biosynthesis; biotin biosynthesis; biotin from 7,8-diaminononanoate: step 2/2. Functionally, catalyzes the conversion of dethiobiotin (DTB) to biotin by the insertion of a sulfur atom into dethiobiotin via a radical-based mechanism. This chain is Biotin synthase, found in Bacillus licheniformis (strain ATCC 14580 / DSM 13 / JCM 2505 / CCUG 7422 / NBRC 12200 / NCIMB 9375 / NCTC 10341 / NRRL NRS-1264 / Gibson 46).